Consider the following 317-residue polypeptide: 4-hydroxy-3-methylbut-2-enyl diphosphate reductase (317 aa).

Cysteine 12 contacts [4Fe-4S] cluster. The (2E)-4-hydroxy-3-methylbut-2-enyl diphosphate site is built by histidine 41 and histidine 74. Positions 41 and 74 each coordinate dimethylallyl diphosphate. Residues histidine 41 and histidine 74 each contribute to the isopentenyl diphosphate site. [4Fe-4S] cluster is bound at residue cysteine 97. Residue histidine 125 participates in (2E)-4-hydroxy-3-methylbut-2-enyl diphosphate binding. Position 125 (histidine 125) interacts with dimethylallyl diphosphate. Histidine 125 lines the isopentenyl diphosphate pocket. Catalysis depends on glutamate 127, which acts as the Proton donor. Threonine 168 contacts (2E)-4-hydroxy-3-methylbut-2-enyl diphosphate. Residue cysteine 198 participates in [4Fe-4S] cluster binding. Residues serine 226, serine 227, asparagine 228, and serine 270 each coordinate (2E)-4-hydroxy-3-methylbut-2-enyl diphosphate. Dimethylallyl diphosphate-binding residues include serine 226, serine 227, asparagine 228, and serine 270. Positions 226, 227, 228, and 270 each coordinate isopentenyl diphosphate.

It belongs to the IspH family. In terms of assembly, homodimer. It depends on [4Fe-4S] cluster as a cofactor.

The catalysed reaction is isopentenyl diphosphate + 2 oxidized [2Fe-2S]-[ferredoxin] + H2O = (2E)-4-hydroxy-3-methylbut-2-enyl diphosphate + 2 reduced [2Fe-2S]-[ferredoxin] + 2 H(+). It catalyses the reaction dimethylallyl diphosphate + 2 oxidized [2Fe-2S]-[ferredoxin] + H2O = (2E)-4-hydroxy-3-methylbut-2-enyl diphosphate + 2 reduced [2Fe-2S]-[ferredoxin] + 2 H(+). Its pathway is isoprenoid biosynthesis; dimethylallyl diphosphate biosynthesis; dimethylallyl diphosphate from (2E)-4-hydroxy-3-methylbutenyl diphosphate: step 1/1. It participates in isoprenoid biosynthesis; isopentenyl diphosphate biosynthesis via DXP pathway; isopentenyl diphosphate from 1-deoxy-D-xylulose 5-phosphate: step 6/6. Its function is as follows. Catalyzes the conversion of 1-hydroxy-2-methyl-2-(E)-butenyl 4-diphosphate (HMBPP) into a mixture of isopentenyl diphosphate (IPP) and dimethylallyl diphosphate (DMAPP). Acts in the terminal step of the DOXP/MEP pathway for isoprenoid precursor biosynthesis. The polypeptide is 4-hydroxy-3-methylbut-2-enyl diphosphate reductase (Yersinia pseudotuberculosis serotype IB (strain PB1/+)).